The chain runs to 54 residues: MLHYSVVFLVIALIAAVFGFGGIAAGAVEIAKILFFLFAIMAIVSFVVSLIKKN.

Helical transmembrane passes span 6-26 and 30-50; these read VVFL…IAAG and IAKI…VVSL.

This sequence belongs to the UPF0391 family.

Its subcellular location is the cell membrane. This Polaromonas naphthalenivorans (strain CJ2) protein is UPF0391 membrane protein Pnap_0920.